The sequence spans 280 residues: Succinate dehydrogenase [ubiquinone] iron-sulfur subunit, mitochondrial (280 aa).

The transit peptide at 1–28 (MAAVVAVSLKRWFPATTLGGACLQACRG) directs the protein to the mitochondrion. Residues 40–131 (KKFAIYRWDP…DKVSKIYPLP (92 aa)) form the 2Fe-2S ferredoxin-type domain. N6-acetyllysine occurs at positions 51 and 55. The [2Fe-2S] cluster site is built by Cys-93, Cys-98, Cys-101, and Cys-113. The interaction with SDHAF1 stretch occupies residues 146–218 (FYAQYKSIEP…PAVLMQAYRW (73 aa)). Positions 176–206 (EREKLDGLYECILCACCSTSCPSYWWNGDKY) constitute a 4Fe-4S ferredoxin-type domain. [4Fe-4S] cluster-binding residues include Cys-186, Cys-189, and Cys-192. [3Fe-4S] cluster is bound at residue Cys-196. Trp-201 contacts a ubiquinone. [3Fe-4S] cluster is bound by residues Cys-243 and Cys-249. A [4Fe-4S] cluster-binding site is contributed by Cys-253.

It belongs to the succinate dehydrogenase/fumarate reductase iron-sulfur protein family. As to quaternary structure, component of complex II composed of four subunits: the flavoprotein (FP) SDHA, iron-sulfur protein (IP) SDHB, and a cytochrome b560 composed of SDHC and SDHD. Interacts with SDHAF1; the interaction is required for iron-sulfur cluster incorporation into SDHB. [2Fe-2S] cluster serves as cofactor. It depends on [3Fe-4S] cluster as a cofactor. The cofactor is [4Fe-4S] cluster.

It localises to the mitochondrion inner membrane. It carries out the reaction a quinone + succinate = fumarate + a quinol. The enzyme catalyses (R)-malate + a quinone = enol-oxaloacetate + a quinol. It catalyses the reaction (S)-malate + a quinone = enol-oxaloacetate + a quinol. The protein operates within carbohydrate metabolism; tricarboxylic acid cycle; fumarate from succinate (eukaryal route): step 1/1. With respect to regulation, enol-oxaloacetate inhibits the succinate dehydrogenase activity. In terms of biological role, iron-sulfur protein (IP) subunit of the succinate dehydrogenase complex (mitochondrial respiratory chain complex II), responsible for transferring electrons from succinate to ubiquinone (coenzyme Q). SDH also oxidizes malate to the non-canonical enol form of oxaloacetate, enol-oxaloacetate. Enol-oxaloacetate, which is a potent inhibitor of the succinate dehydrogenase activity, is further isomerized into keto-oxaloacetate. The chain is Succinate dehydrogenase [ubiquinone] iron-sulfur subunit, mitochondrial (SDHB) from Sus scrofa (Pig).